A 404-amino-acid polypeptide reads, in one-letter code: Cysteine desulfurase IscS (404 aa).

Residues 75-76 (AT), Asn-155, Gln-183, and 203-205 (SAH) contribute to the pyridoxal 5'-phosphate site. Lys-206 carries the post-translational modification N6-(pyridoxal phosphate)lysine. Thr-243 contacts pyridoxal 5'-phosphate. Cys-328 acts as the Cysteine persulfide intermediate in catalysis. Position 328 (Cys-328) interacts with [2Fe-2S] cluster.

The protein belongs to the class-V pyridoxal-phosphate-dependent aminotransferase family. NifS/IscS subfamily. As to quaternary structure, homodimer. Forms a heterotetramer with IscU, interacts with other sulfur acceptors. Pyridoxal 5'-phosphate serves as cofactor.

The protein resides in the cytoplasm. The enzyme catalyses (sulfur carrier)-H + L-cysteine = (sulfur carrier)-SH + L-alanine. It participates in cofactor biosynthesis; iron-sulfur cluster biosynthesis. In terms of biological role, master enzyme that delivers sulfur to a number of partners involved in Fe-S cluster assembly, tRNA modification or cofactor biosynthesis. Catalyzes the removal of elemental sulfur atoms from cysteine to produce alanine. Functions as a sulfur delivery protein for Fe-S cluster synthesis onto IscU, an Fe-S scaffold assembly protein, as well as other S acceptor proteins. This chain is Cysteine desulfurase IscS, found in Stutzerimonas stutzeri (strain A1501) (Pseudomonas stutzeri).